The chain runs to 218 residues: UPF0598 protein C8orf82 homolog (218 aa).

Belongs to the UPF0598 family.

The polypeptide is UPF0598 protein C8orf82 homolog (Mus musculus (Mouse)).